Reading from the N-terminus, the 2564-residue chain is Spectrin beta chain, non-erythrocytic 4 (2564 aa).

Residues 1–37 form a disordered region; that stretch reads MAQVPGEVDNMEGLPAPNNNPAARWESPDRGWEREQP. The tract at residues 1–282 is actin-binding; it reads MAQVPGEVDN…IITYVVSFYH (282 aa). The span at 26 to 36 shows a compositional bias: basic and acidic residues; it reads ESPDRGWEREQ. Calponin-homology (CH) domains are found at residues 61-165 and 180-285; these read AVQK…LRFQ and RSAK…HYFS. Spectrin repeat units follow at residues 311-418, 430-533, 536-641, 774-879, 884-982, 1089-1196, 1306-1407, 1412-1512, 1515-1617, 1623-1725, 1728-1830, 1835-1935, 1944-2046, and 2049-2123; these read IERY…AALR, LAQR…RLEQ, ALQK…AELE, ALHQ…WLRD, YRMF…RKEE, RLQR…EALV, ELQH…RQLF, ADQL…RLLL, KELH…QQVL, VEQY…ALEQ, WLYQ…AQLL, ELHK…EDAR, ALRF…WLQQ, and EVHQ…QSKQ. The segment at 1853–1872 is disordered; sequence KRRRLPRLTTPPEPRPSASS. Residues 2208–2225 show a composition bias toward low complexity; the sequence is PAAPEDAAETPATPAAAE. 2 disordered regions span residues 2208 to 2439 and 2533 to 2564; these read PAAP…KSSN and ARWGQTLPTTSSTDEGNPKREGGDRRASGRRK. Basic and acidic residues-rich tracts occupy residues 2227–2254, 2268–2278, and 2287–2318; these read VRPRPERQESADRAEELPRRRRPERQES, ERQESAEHEAA, and EQMERRRERRERRLERQESSEQEMPIRGDLVK. Pro residues predominate over residues 2343–2355; that stretch reads PSLPQPRELPPGR. Composition is skewed to basic and acidic residues over residues 2362–2377 and 2424–2435; these read LPERTPRPDRPRARDR and FLLRKRELDANR. Residues 2418–2527 enclose the PH domain; sequence TVQHEGFLLR…WLEAVASSVA (110 aa). The span at 2538–2547 shows a compositional bias: polar residues; the sequence is TLPTTSSTDE. The segment covering 2548 to 2564 has biased composition (basic and acidic residues); that stretch reads GNPKREGGDRRASGRRK.

The protein belongs to the spectrin family. As to expression, expressed in skeletal muscle at the sarcolemma and in the muscle capillaries (at protein level). Abundantly expressed in brain and pancreatic islets.

Its subcellular location is the cytoplasm. The protein localises to the cytoskeleton. The protein resides in the cell cortex. The chain is Spectrin beta chain, non-erythrocytic 4 (SPTBN4) from Homo sapiens (Human).